Consider the following 197-residue polypeptide: Phosphoheptose isomerase (197 aa).

Residues 34–192 (MVNALINGNK…CEGVDDCLFP (159 aa)) enclose the SIS domain. Substrate-binding positions include 49 to 51 (NGG), glutamine 62, 91 to 92 (ND), serine 122, and histidine 172. Residue glutamine 62 coordinates Zn(2+). Zn(2+)-binding residues include histidine 172 and histidine 180.

It belongs to the SIS family. GmhA subfamily. As to quaternary structure, homotetramer. Zn(2+) serves as cofactor.

The protein localises to the cytoplasm. The catalysed reaction is 2 D-sedoheptulose 7-phosphate = D-glycero-alpha-D-manno-heptose 7-phosphate + D-glycero-beta-D-manno-heptose 7-phosphate. The protein operates within carbohydrate biosynthesis; D-glycero-D-manno-heptose 7-phosphate biosynthesis; D-glycero-alpha-D-manno-heptose 7-phosphate and D-glycero-beta-D-manno-heptose 7-phosphate from sedoheptulose 7-phosphate: step 1/1. Functionally, catalyzes the isomerization of sedoheptulose 7-phosphate in D-glycero-D-manno-heptose 7-phosphate. This Pseudoalteromonas atlantica (strain T6c / ATCC BAA-1087) protein is Phosphoheptose isomerase.